The primary structure comprises 185 residues: Small ribosomal subunit protein uS4c (185 aa).

Residues Met-72–Glu-134 enclose the S4 RNA-binding domain. Residues Lys-132–Arg-154 form a disordered region.

This sequence belongs to the universal ribosomal protein uS4 family. Part of the 30S ribosomal subunit. Contacts protein S5. The interaction surface between S4 and S5 is involved in control of translational fidelity.

It localises to the plastid. Its subcellular location is the chloroplast. Functionally, one of the primary rRNA binding proteins, it binds directly to 16S rRNA where it nucleates assembly of the body of the 30S subunit. Its function is as follows. With S5 and S12 plays an important role in translational accuracy. This is Small ribosomal subunit protein uS4c (rps4) from Woodwardia radicans (Rooting chainfern).